The chain runs to 852 residues: DNA mismatch repair protein MutS (852 aa).

Residue 602 to 609 (GPNMSGKS) coordinates ATP.

Belongs to the DNA mismatch repair MutS family.

Functionally, this protein is involved in the repair of mismatches in DNA. It is possible that it carries out the mismatch recognition step. This protein has a weak ATPase activity. The protein is DNA mismatch repair protein MutS of Streptococcus thermophilus (strain CNRZ 1066).